The following is a 666-amino-acid chain: tRNA 5-methylaminomethyl-2-thiouridine biosynthesis bifunctional protein MnmC (666 aa).

A tRNA (mnm(5)s(2)U34)-methyltransferase region spans residues 1 to 253 (MSSPFVPIIT…KRHMICAHYE (253 aa)). Positions 283-666 (VGGGLAGCFI…FLRKKIIQGP (384 aa)) are FAD-dependent cmnm(5)s(2)U34 oxidoreductase.

The protein in the N-terminal section; belongs to the methyltransferase superfamily. tRNA (mnm(5)s(2)U34)-methyltransferase family. It in the C-terminal section; belongs to the DAO family. It depends on FAD as a cofactor.

It is found in the cytoplasm. It carries out the reaction 5-aminomethyl-2-thiouridine(34) in tRNA + S-adenosyl-L-methionine = 5-methylaminomethyl-2-thiouridine(34) in tRNA + S-adenosyl-L-homocysteine + H(+). In terms of biological role, catalyzes the last two steps in the biosynthesis of 5-methylaminomethyl-2-thiouridine (mnm(5)s(2)U) at the wobble position (U34) in tRNA. Catalyzes the FAD-dependent demodification of cmnm(5)s(2)U34 to nm(5)s(2)U34, followed by the transfer of a methyl group from S-adenosyl-L-methionine to nm(5)s(2)U34, to form mnm(5)s(2)U34. The protein is tRNA 5-methylaminomethyl-2-thiouridine biosynthesis bifunctional protein MnmC of Legionella pneumophila subsp. pneumophila (strain Philadelphia 1 / ATCC 33152 / DSM 7513).